The primary structure comprises 49 residues: Lectin alpha chain (49 aa).

This sequence belongs to the leguminous lectin family. In terms of assembly, homotetramer. In terms of processing, the beta and gamma chains are produced by partial proteolytic processing of the lectin alpha chain by an asparaginyl endopeptidase. Mixture of 60% alpha lectin and 40% of its beta and gamma proteolytic fragments. As to expression, seed.

Functionally, D-mannose/D-glucose-binding lectin. This chain is Lectin alpha chain, found in Dioclea violacea.